The sequence spans 86 residues: Phosphocarrier protein HPr (86 aa).

The region spanning 1–86 (MVKKEAIIKA…LAELIESFKE (86 aa)) is the HPr domain. His15 serves as the catalytic Pros-phosphohistidine intermediate.

Belongs to the HPr family.

Its subcellular location is the cytoplasm. Functionally, general (non sugar-specific) component of the phosphoenolpyruvate-dependent sugar phosphotransferase system (sugar PTS). This major carbohydrate active-transport system catalyzes the phosphorylation of incoming sugar substrates concomitantly with their translocation across the cell membrane. The phosphoryl group from phosphoenolpyruvate (PEP) is transferred to the phosphoryl carrier protein HPr by enzyme I. Phospho-HPr then transfers it to the PTS EIIA domain. In Borreliella burgdorferi (strain ATCC 35210 / DSM 4680 / CIP 102532 / B31) (Borrelia burgdorferi), this protein is Phosphocarrier protein HPr (ptsH).